The primary structure comprises 369 residues: Glutamate 5-kinase (369 aa).

Lys-9 lines the ATP pocket. Residues Ser-49, Asp-136, and Asn-148 each coordinate substrate. ATP contacts are provided by residues Thr-168 to Asp-169 and Thr-210 to Lys-216. The region spanning Gln-275–Trp-355 is the PUA domain.

Belongs to the glutamate 5-kinase family.

The protein resides in the cytoplasm. It catalyses the reaction L-glutamate + ATP = L-glutamyl 5-phosphate + ADP. It participates in amino-acid biosynthesis; L-proline biosynthesis; L-glutamate 5-semialdehyde from L-glutamate: step 1/2. In terms of biological role, catalyzes the transfer of a phosphate group to glutamate to form L-glutamate 5-phosphate. The polypeptide is Glutamate 5-kinase (Streptococcus pneumoniae (strain Hungary19A-6)).